A 554-amino-acid polypeptide reads, in one-letter code: Hydroxylamine reductase (554 aa).

Positions 3, 6, 18, and 25 each coordinate [2Fe-2S] cluster. Hybrid [4Fe-2O-2S] cluster is bound by residues His-252, Glu-276, Cys-320, Cys-408, Cys-436, Cys-461, Glu-495, and Lys-497. Position 408 is a cysteine persulfide (Cys-408).

Belongs to the HCP family. It depends on [2Fe-2S] cluster as a cofactor. Hybrid [4Fe-2O-2S] cluster is required as a cofactor.

The protein localises to the cytoplasm. The catalysed reaction is A + NH4(+) + H2O = hydroxylamine + AH2 + H(+). Its function is as follows. Catalyzes the reduction of hydroxylamine to form NH(3) and H(2)O. This is Hydroxylamine reductase from Shewanella loihica (strain ATCC BAA-1088 / PV-4).